We begin with the raw amino-acid sequence, 430 residues long: RNA polymerase-associated protein LEO1 (430 aa).

The segment covering 1–10 (MSSSEGNSDA) has biased composition (polar residues). The disordered stretch occupies residues 1–128 (MSSSEGNSDA…SRGSLNDLQG (128 aa)). Residues 18–30 (KSSTPSSRGSSPD) are compositionally biased toward low complexity. A compositionally biased stretch (basic and acidic residues) spans 99 to 119 (REGKPKESNTRARLSDSDAES). 2 coiled-coil regions span residues 326 to 347 (TRRE…RTQM) and 409 to 429 (EEYR…DEES). The segment at 349 to 430 (RNNFKVRGPR…QIVTSDEESD (82 aa)) is disordered.

It belongs to the LEO1 family. In terms of assembly, component of the PAF1 complex which consists of at least cdc-73, ctr-9, leo-1, pafo-1 and rtfo-1.

It localises to the nucleus. The protein localises to the cytoplasm. Its function is as follows. Component of the PAF1 complex which is a multifunctional complex involved in transcription initiation via genetic interactions with TATA-binding proteins, elongation and transcription-coupled histone modification. The chain is RNA polymerase-associated protein LEO1 from Caenorhabditis elegans.